A 353-amino-acid polypeptide reads, in one-letter code: Quinolinate synthase (353 aa).

The iminosuccinate site is built by histidine 47 and serine 68. Cysteine 113 serves as a coordination point for [4Fe-4S] cluster. Iminosuccinate is bound by residues 139–141 and serine 156; that span reads YAN. Cysteine 200 contacts [4Fe-4S] cluster. Residues 226–228 and threonine 243 contribute to the iminosuccinate site; that span reads HPE. Cysteine 297 serves as a coordination point for [4Fe-4S] cluster.

Belongs to the quinolinate synthase family. Type 1 subfamily. [4Fe-4S] cluster serves as cofactor.

It is found in the cytoplasm. It catalyses the reaction iminosuccinate + dihydroxyacetone phosphate = quinolinate + phosphate + 2 H2O + H(+). It participates in cofactor biosynthesis; NAD(+) biosynthesis; quinolinate from iminoaspartate: step 1/1. Functionally, catalyzes the condensation of iminoaspartate with dihydroxyacetone phosphate to form quinolinate. This is Quinolinate synthase from Erwinia tasmaniensis (strain DSM 17950 / CFBP 7177 / CIP 109463 / NCPPB 4357 / Et1/99).